The sequence spans 459 residues: Cysteine--tRNA ligase (459 aa).

Cys28 is a binding site for Zn(2+). The 'HIGH' region motif lies at 30–40 (VTVYDLCHIGH). The Zn(2+) site is built by Cys209, His234, and Glu238. The short motif at 266-270 (KMSKS) is the 'KMSKS' region element. Residue Lys269 participates in ATP binding.

The protein belongs to the class-I aminoacyl-tRNA synthetase family. In terms of assembly, monomer. The cofactor is Zn(2+).

It localises to the cytoplasm. It carries out the reaction tRNA(Cys) + L-cysteine + ATP = L-cysteinyl-tRNA(Cys) + AMP + diphosphate. The polypeptide is Cysteine--tRNA ligase (cysS) (Haemophilus influenzae (strain ATCC 51907 / DSM 11121 / KW20 / Rd)).